The following is a 1134-amino-acid chain: Protocadherin-18 (1134 aa).

The N-terminal stretch at 1-27 (MYQMNAKMHFTFVFALLVVSFNLDVLG) is a signal peptide. Cadherin domains are found at residues 28 to 137 (KNLK…SPQF), 138 to 246 (SRSL…SPAF), 247 to 354 (EQQS…KPEI), 361 to 465 (PGKE…PPHF), 466 to 576 (QRSR…VPVV), and 582 to 697 (RNNT…APLD). At 28 to 699 (KNLKYRIYEE…SVSQAPLDVS (672 aa)) the chain is on the extracellular side. N-linked (GlcNAc...) asparagine glycosylation is present at Asn-103. Asn-269 is a glycosylation site (N-linked (GlcNAc...) asparagine). Asn-559 carries an N-linked (GlcNAc...) asparagine glycan. Residues 700–720 (MIIIISLGAICAVLLVIMVLF) traverse the membrane as a helical segment. The Cytoplasmic portion of the chain corresponds to 721-1134 (ATRCNREKKD…NKLLQDVRQS (414 aa)). Disordered stretches follow at residues 768-800 (TLPI…NSHQ), 868-888 (SLKD…DLGR), and 941-1003 (DYRS…TSSL). Positions 791 to 800 (GSRQSHNSHQ) are enriched in polar residues. Basic and acidic residues predominate over residues 868–877 (SLKDSGRGDS). The tract at residues 892–1134 (IDRLLGEGFS…NKLLQDVRQS (243 aa)) is interaction with DAB1.

Interacts with DAB1.

It localises to the cell membrane. In terms of biological role, potential calcium-dependent cell-adhesion protein. This Bos taurus (Bovine) protein is Protocadherin-18 (PCDH18).